A 392-amino-acid polypeptide reads, in one-letter code: Protein FAM53C (392 aa).

M1 carries the post-translational modification N-acetylmethionine. The segment at L76–S120 is disordered. Over residues S85–S97 the composition is skewed to low complexity. Phosphoserine is present on residues S122 and S162. Disordered regions lie at residues L141–V167 and D201–R294. A compositionally biased stretch (polar residues) spans D201 to W215. 4 positions are modified to phosphoserine: S232, S234, S255, and S273. Low complexity predominate over residues A241–P256. Positions L278–R294 are enriched in basic and acidic residues. Position 299 is a phosphoserine (S299).

The protein belongs to the FAM53 family.

The chain is Protein FAM53C from Bos taurus (Bovine).